Consider the following 835-residue polypeptide: Phenylalanine--tRNA ligase beta subunit (835 aa).

The tRNA-binding domain maps to 44-160; it reads PATTGPLVLG…ESGQPGDDAR (117 aa). In terms of domain architecture, B5 spans 419–494; the sequence is PTMPSITMPV…RLEGLEAIPT (76 aa). 4 residues coordinate Mg(2+): D472, D478, E481, and E482. Residues 741-834 form the FDX-ACB domain; that stretch reads SAFPALHQDI…AKERLGAEMR (94 aa).

This sequence belongs to the phenylalanyl-tRNA synthetase beta subunit family. Type 1 subfamily. As to quaternary structure, tetramer of two alpha and two beta subunits. The cofactor is Mg(2+).

It is found in the cytoplasm. The enzyme catalyses tRNA(Phe) + L-phenylalanine + ATP = L-phenylalanyl-tRNA(Phe) + AMP + diphosphate + H(+). In Corynebacterium efficiens (strain DSM 44549 / YS-314 / AJ 12310 / JCM 11189 / NBRC 100395), this protein is Phenylalanine--tRNA ligase beta subunit.